A 136-amino-acid chain; its full sequence is Autophagy-related protein 41 (136 aa).

The interval 127–136 (QNYRLWLSSV) is ATG9-binding.

Interacts with ATG9.

It is found in the preautophagosomal structure membrane. In terms of biological role, involved in both selective and non-selective autophagy. Does not appear to play a role in determining the size of autophagosomes, but rather influences their formation rate. With ATG9, plays a role in the delivery of donor membrane to expanding phagophore. This Saccharomyces cerevisiae (strain ATCC 204508 / S288c) (Baker's yeast) protein is Autophagy-related protein 41.